The primary structure comprises 62 residues: Small ribosomal subunit protein eS27 (62 aa).

C17, C20, C36, and C39 together coordinate Zn(2+). The C4-type zinc finger occupies 17 to 39 (CNDCENEQIIFGSASRKITCVVC).

This sequence belongs to the eukaryotic ribosomal protein eS27 family. As to quaternary structure, part of the 30S ribosomal subunit. Requires Zn(2+) as cofactor.

This chain is Small ribosomal subunit protein eS27, found in Methanosarcina mazei (strain ATCC BAA-159 / DSM 3647 / Goe1 / Go1 / JCM 11833 / OCM 88) (Methanosarcina frisia).